Reading from the N-terminus, the 37-residue chain is Translationally-controlled tumor protein homolog (37 aa).

In terms of domain architecture, TCTP spans 1 to 37; the sequence is MKIFRDILTNAEVVXDNDKPMDVLDEIVYAXQGRYIE.

It belongs to the TCTP family. As to quaternary structure, monomer.

Its subcellular location is the cytoplasm. In terms of biological role, binds calcium; exact function not known. This chain is Translationally-controlled tumor protein homolog, found in Trypanosoma brucei brucei.